The following is a 275-amino-acid chain: Methylthioribulose-1-phosphate dehydratase (275 aa).

Cys125 provides a ligand contact to substrate. Residues His143 and His145 each contribute to the Zn(2+) site. Catalysis depends on Glu168, which acts as the Proton donor/acceptor. A Zn(2+)-binding site is contributed by His233.

It belongs to the aldolase class II family. MtnB subfamily. Requires Zn(2+) as cofactor.

The protein localises to the cytoplasm. The enzyme catalyses 5-(methylsulfanyl)-D-ribulose 1-phosphate = 5-methylsulfanyl-2,3-dioxopentyl phosphate + H2O. It functions in the pathway amino-acid biosynthesis; L-methionine biosynthesis via salvage pathway; L-methionine from S-methyl-5-thio-alpha-D-ribose 1-phosphate: step 2/6. Its function is as follows. Catalyzes the dehydration of methylthioribulose-1-phosphate (MTRu-1-P) into 2,3-diketo-5-methylthiopentyl-1-phosphate (DK-MTP-1-P). The chain is Methylthioribulose-1-phosphate dehydratase from Lodderomyces elongisporus (strain ATCC 11503 / CBS 2605 / JCM 1781 / NBRC 1676 / NRRL YB-4239) (Yeast).